A 544-amino-acid polypeptide reads, in one-letter code: Prolyl 4-hydroxylase subunit alpha-3 (544 aa).

The first 19 residues, 1–19, serve as a signal peptide directing secretion; the sequence is MGPGARLAALLAVLALGTG. The stretch at 107 to 131 forms a coiled coil; it reads LEASENIRALKDGYEKVEQDLPAFE. Residues 227 to 260 form a TPR repeat; that stretch reads EDALDHLAFAYFRAGNVSCALSLSREFLLYSPDN. A glycan (N-linked (GlcNAc...) asparagine) is linked at Asn-242. Residues 422-529 form the Fe2OG dioxygenase domain; sequence YAEYLQVVNY…KWVANKWIHE (108 aa). Fe cation-binding residues include His-440 and Asp-442. Residue Asn-482 is glycosylated (N-linked (GlcNAc...) asparagine). His-510 is a Fe cation binding site. 2-oxoglutarate is bound at residue Lys-520.

This sequence belongs to the P4HA family. Heterotetramer of two alpha-3 chains and two beta chains (the beta chain is the multi-functional PDI). Requires Fe(2+) as cofactor. The cofactor is L-ascorbate. N-glycosylation plays no role in the catalytic activity. In terms of tissue distribution, highly expressed in placenta, liver and fetal skin. Weakly expressed in fetal epiphyseal cartilage, fetal liver, fibroblast, lung and skeletal muscle. Expressed also in fibrous cap of carotid atherosclerotic lesions.

The protein localises to the endoplasmic reticulum lumen. It catalyses the reaction L-prolyl-[collagen] + 2-oxoglutarate + O2 = trans-4-hydroxy-L-prolyl-[collagen] + succinate + CO2. Its function is as follows. Catalyzes the post-translational formation of 4-hydroxyproline in -Xaa-Pro-Gly- sequences in collagens and other proteins. The chain is Prolyl 4-hydroxylase subunit alpha-3 (P4HA3) from Homo sapiens (Human).